The primary structure comprises 225 residues: Urease accessory protein UreF (225 aa).

The protein belongs to the UreF family. UreD, UreF and UreG form a complex that acts as a GTP-hydrolysis-dependent molecular chaperone, activating the urease apoprotein by helping to assemble the nickel containing metallocenter of UreC. The UreE protein probably delivers the nickel.

It localises to the cytoplasm. Functionally, required for maturation of urease via the functional incorporation of the urease nickel metallocenter. The polypeptide is Urease accessory protein UreF (Geobacillus kaustophilus (strain HTA426)).